The following is a 452-amino-acid chain: UPF0210 protein PTH_0987 (452 aa).

Belongs to the UPF0210 family. As to quaternary structure, homodimer.

In Pelotomaculum thermopropionicum (strain DSM 13744 / JCM 10971 / SI), this protein is UPF0210 protein PTH_0987.